Here is a 27-residue protein sequence, read N- to C-terminus: C-reactive protein P1 (27 aa).

Residues 1–27 form a disordered region; that stretch reads IPQDLSGKMLTFPKEEDDDDVKLMTPK. Residues 6 to 27 enclose the Pentraxin (PTX) domain; the sequence is SGKMLTFPKEEDDDDVKLMTPK.

It belongs to the pentraxin family. Homopentamer. Pentraxin (or pentaxin) have a discoid arrangement of 5 non-covalently bound subunits. Exists as a dimer under reducing conditions. The cofactor is Ca(2+). In terms of processing, glycosylated.

It is found in the secreted. Its function is as follows. Displays several functions associated with host defense: it promotes agglutination, bacterial capsular swelling, phagocytosis, and complement fixation through its calcium-dependent binding to phosphorylcholine. The sequence is that of C-reactive protein P1 from Gadus morhua (Atlantic cod).